A 277-amino-acid polypeptide reads, in one-letter code: Shikimate dehydrogenase (NADP(+)) (277 aa).

Shikimate contacts are provided by residues 15–17 (SLS) and Thr-62. The active-site Proton acceptor is the Lys-66. 2 residues coordinate shikimate: Asn-87 and Asp-102. NADP(+) contacts are provided by residues 127–131 (GAGGA) and Ile-219. Residue Tyr-221 participates in shikimate binding. Gly-242 provides a ligand contact to NADP(+).

Belongs to the shikimate dehydrogenase family. In terms of assembly, homodimer.

The catalysed reaction is shikimate + NADP(+) = 3-dehydroshikimate + NADPH + H(+). The protein operates within metabolic intermediate biosynthesis; chorismate biosynthesis; chorismate from D-erythrose 4-phosphate and phosphoenolpyruvate: step 4/7. Involved in the biosynthesis of the chorismate, which leads to the biosynthesis of aromatic amino acids. Catalyzes the reversible NADPH linked reduction of 3-dehydroshikimate (DHSA) to yield shikimate (SA). In Bacillus cytotoxicus (strain DSM 22905 / CIP 110041 / 391-98 / NVH 391-98), this protein is Shikimate dehydrogenase (NADP(+)).